We begin with the raw amino-acid sequence, 458 residues long: tRNA modification GTPase MnmE (458 aa).

3 residues coordinate (6S)-5-formyl-5,6,7,8-tetrahydrofolate: Arg22, Glu84, and Arg123. The 160-residue stretch at Gly220–Phe379 folds into the TrmE-type G domain. A K(+)-binding site is contributed by Asn230. Residues Asn230–Ser235, Thr249–Thr255, and Asp274–Gly277 each bind GTP. Ser234 is a binding site for Mg(2+). K(+) is bound by residues Thr249, Ile251, and Thr254. Thr255 is a binding site for Mg(2+). Lys458 contributes to the (6S)-5-formyl-5,6,7,8-tetrahydrofolate binding site.

This sequence belongs to the TRAFAC class TrmE-Era-EngA-EngB-Septin-like GTPase superfamily. TrmE GTPase family. As to quaternary structure, homodimer. Heterotetramer of two MnmE and two MnmG subunits. The cofactor is K(+).

The protein resides in the cytoplasm. Exhibits a very high intrinsic GTPase hydrolysis rate. Involved in the addition of a carboxymethylaminomethyl (cmnm) group at the wobble position (U34) of certain tRNAs, forming tRNA-cmnm(5)s(2)U34. This is tRNA modification GTPase MnmE from Bacillus cytotoxicus (strain DSM 22905 / CIP 110041 / 391-98 / NVH 391-98).